The following is a 186-amino-acid chain: Protein GrpE (186 aa).

Over residues 1–22 the composition is skewed to basic and acidic residues; sequence MSDSNKEKKKKFADMVSKRKGD. The tract at residues 1 to 35 is disordered; it reads MSDSNKEKKKKFADMVSKRKGDDQEDQQTGDLSEE. The segment covering 23–34 has biased composition (acidic residues); it reads DQEDQQTGDLSE.

It belongs to the GrpE family. As to quaternary structure, homodimer.

The protein resides in the cytoplasm. In terms of biological role, participates actively in the response to hyperosmotic and heat shock by preventing the aggregation of stress-denatured proteins, in association with DnaK and GrpE. It is the nucleotide exchange factor for DnaK and may function as a thermosensor. Unfolded proteins bind initially to DnaJ; upon interaction with the DnaJ-bound protein, DnaK hydrolyzes its bound ATP, resulting in the formation of a stable complex. GrpE releases ADP from DnaK; ATP binding to DnaK triggers the release of the substrate protein, thus completing the reaction cycle. Several rounds of ATP-dependent interactions between DnaJ, DnaK and GrpE are required for fully efficient folding. The polypeptide is Protein GrpE (Wolbachia pipientis subsp. Culex pipiens (strain wPip)).